Here is a 4910-residue protein sequence, read N- to C-terminus: Midasin (4910 aa).

AAA-ATPase protomer stretches follow at residues 305–528 (IQNS…DILF) and 636–975 (MEQI…TDII). Residues 315–322 (GKAGSGKT) and 653–660 (GETGTGKT) each bind ATP. Positions 695–803 (VNSKTVAVPI…KKFEAQSSSI (109 aa)) are interaction with RIX1. A Phosphothreonine modification is found at threonine 1026. 4 AAA-ATPase protomer regions span residues 1054–1280 (HYII…WALR), 1345–1624 (KGMR…VEFI), 1732–1985 (RVVR…QLLI), and 2036–2286 (VYES…DELH). ATP contacts are provided by residues 1083–1090 (GPTSSGKT), 1368–1375 (GETGCGKT), 1747–1754 (GSPGVGKT), and 2054–2061 (GPSNSGKT). The segment at 2372–4075 (EVGKWANNVL…DGEGAQNNNK (1704 aa)) is linker. Position 2971 is a phosphoserine (serine 2971). Disordered regions lie at residues 4045-4547 (SPQP…EKMD), 4555-4574 (SDIDAHDANNDVDSKKSGFI), and 4579-4600 (SEEDFENELSNEHFSADQEDDS). Positions 4078–4088 (EQDEDLTEDAQ) are enriched in acidic residues. A compositionally biased stretch (basic and acidic residues) spans 4089–4098 (NENKEQQDKD). Residues 4099 to 4154 (ERDDENEDDAVEMEGDMAGELEDLSNGEENDDEDTDSEEEELDEEIDDLNEDDPNA) show a composition bias toward acidic residues. Residues 4155-4174 (IDDKMWDDKASDNSKEKDTD) are compositionally biased toward basic and acidic residues. 3 stretches are compositionally biased toward acidic residues: residues 4202–4244 (GDED…EDLE), 4251–4274 (ETLDLPEDMNLDSEHEESDEDVDM), and 4288–4358 (GNED…EEEL). At serine 4353 the chain carries Phosphoserine. Basic and acidic residues predominate over residues 4359 to 4372 (KQDAAMEENKEKGG). Threonine 4388 is modified (phosphothreonine). 2 stretches are compositionally biased toward basic and acidic residues: residues 4435 to 4447 (DVTKNNEESREEA) and 4481 to 4495 (LEKNNERPDEFEHVE). Positions 4498-4516 (NTETDTQALGSATQDQLQT) are enriched in polar residues. Residues 4517 to 4531 (IDEDMAIDDDREEQE) are compositionally biased toward acidic residues. Serine 4555 is subject to Phosphoserine. Positions 4557-4570 (IDAHDANNDVDSKK) are enriched in basic and acidic residues. Residues 4704-4899 (QIMIALDDSK…SELPEMLSLI (196 aa)) enclose the VWFA domain.

It belongs to the midasin family. Associates with pre-60S ribosomes in the nucleoplasm. Interacts (via its hexameric AAA ATPase ring) with the RIX1 complex (via RIX1); this interaction is crucial for recruitment of MDN1 to the pre-ribosomal particle. Interacts (via VWFA/MIDAS domain) with YTM1 (via UBL domain). Interacts (via VWFA/MIDAS domain) with RSA4 (via UBL domain).

It localises to the nucleus. Its subcellular location is the nucleolus. The protein localises to the nucleoplasm. In terms of biological role, nuclear chaperone required for maturation and nuclear export of pre-60S ribosome subunits. Functions at successive maturation steps to remove ribosomal factors at critical transition points, first driving the exit of early pre-60S particles from the nucleolus and then driving late pre-60S particles from the nucleus. At an early stage in 60S maturation, mediates the dissociation of the NOP7 complex (YTM1-ERB1-NOP7) from early pre-60S particles, rendering them competent for export from the nucleolus to the nucleoplasm. Subsequently recruited to the nucleoplasmic particles through interaction with the RIX1 complex. This binding is only possible if the 5S RNP at the central protuberance has undergone the rotation to complete its maturation. After remodeling, removes the ribosome biogenesis factor RSA4 in an ATP hydrolysis-driven step from pre-60S ribosomal subunits, rendering them competent for export from the nucleoplasm to the cytoplasm. Activates the GTPase activity of NOG2, which disengages from the pre-60S particle upon GTP hydrolysis, thus freeing its binding site for the nuclear export factor NMD3. The protein is Midasin (MDN1) of Saccharomyces cerevisiae (strain ATCC 204508 / S288c) (Baker's yeast).